An 881-amino-acid polypeptide reads, in one-letter code: Band 4.1-like protein 1 (881 aa).

M1 is modified (N-acetylmethionine). Residues 1 to 88 form a disordered region; it reads MTTETGPDSE…TPSKAQKSPQ (88 aa). Low complexity predominate over residues 17–35; that stretch reads EAPQQPEAAAAVTTPVTPA. T30 carries the post-translational modification Phosphothreonine. The span at 38-50 shows a compositional bias: basic and acidic residues; it reads GHPEANSNEKHPS. S75 is subject to Phosphoserine. The span at 76–87 shows a compositional bias: polar residues; it reads ERTTPSKAQKSP. T79 is modified (phosphothreonine). Positions 97 to 378 constitute an FERM domain; the sequence is AICRVTLLDA…EHHTFFRLVS (282 aa). Y343 carries the phosphotyrosine modification. Phosphoserine is present on residues S378, S430, and S437. The interval 428 to 501 is disordered; it reads SRSLDGAEFS…HKQEFLDKPE (74 aa). The span at 444–457 shows a compositional bias: basic and acidic residues; it reads ENHDAGPDGDKRDE. 2 positions are modified to phosphoserine: S461 and S466. Basic and acidic residues predominate over residues 466–501; that stretch reads SEAEEGEVRTPTKIKELKPEQETTPRHKQEFLDKPE. The residue at position 475 (T475) is a Phosphothreonine. Residues 483–541 are spectrin--actin-binding; it reads KPEQETTPRHKQEFLDKPEDVLLKHQASINELKRTLKEPNSKLIHRDRDWERERRLPSS. S510 carries the post-translational modification Phosphoserine. The span at 514-538 shows a compositional bias: basic and acidic residues; sequence LKRTLKEPNSKLIHRDRDWERERRL. The disordered stretch occupies residues 514-596; that stretch reads LKRTLKEPNS…QERDTVFLKD (83 aa). 4 positions are modified to phosphoserine: S540, S541, S544, and S546. Position 550 is a phosphothreonine (T550). The span at 550–577 shows a compositional bias: basic and acidic residues; the sequence is TPEKANERAGLREGSEEKVKPPRPRAPE. Phosphoserine is present on residues S564 and S578. Phosphothreonine is present on T580. S639, S648, S650, S667, S672, S678, and S685 each carry phosphoserine. A disordered region spans residues 642-699; that stretch reads ELDRDKSDSDTEGLLFSRDLNKGAPSQDDESGGIEDSPDRGACSTPDMPQFEPVKTET. The residue at position 686 (T686) is a Phosphothreonine. Phosphoserine occurs at positions 722, 784, and 870. A C-terminal (CTD) region spans residues 746–881; that stretch reads SITTETISTT…EERDKKPQES (136 aa).

Interacts with AGAP2. As to expression, highest expression in brain, lower in heart, kidney, pancreas, placenta, lung and skeletal muscle.

It is found in the cytoplasm. The protein localises to the cytoskeleton. May function to confer stability and plasticity to neuronal membrane via multiple interactions, including the spectrin-actin-based cytoskeleton, integral membrane channels and membrane-associated guanylate kinases. This Homo sapiens (Human) protein is Band 4.1-like protein 1.